We begin with the raw amino-acid sequence, 622 residues long: Phosphomethylpyrimidine synthase (622 aa).

Substrate is bound by residues Asn226, Met255, Tyr284, His320, 340 to 342, 381 to 384, and Glu420; these read SRG and DGLR. Position 424 (His424) interacts with Zn(2+). Tyr447 is a binding site for substrate. Residue His488 participates in Zn(2+) binding. The [4Fe-4S] cluster site is built by Cys568, Cys571, and Cys576.

Belongs to the ThiC family. Homodimer. [4Fe-4S] cluster serves as cofactor.

It catalyses the reaction 5-amino-1-(5-phospho-beta-D-ribosyl)imidazole + S-adenosyl-L-methionine = 4-amino-2-methyl-5-(phosphooxymethyl)pyrimidine + CO + 5'-deoxyadenosine + formate + L-methionine + 3 H(+). It functions in the pathway cofactor biosynthesis; thiamine diphosphate biosynthesis. In terms of biological role, catalyzes the synthesis of the hydroxymethylpyrimidine phosphate (HMP-P) moiety of thiamine from aminoimidazole ribotide (AIR) in a radical S-adenosyl-L-methionine (SAM)-dependent reaction. In Ruthia magnifica subsp. Calyptogena magnifica, this protein is Phosphomethylpyrimidine synthase.